We begin with the raw amino-acid sequence, 807 residues long: MDYGGGFEDHELREAQREYLDFLDDDQDQGLYHGKVRDMIGSNEHRLIVNLNDVRRKNDKRANLMLNDAFAETIAFQRALKDLVASIDATYAKQFEEFSVGFEGSFGSKHVSPRTLTASLLGSLVCVEGIVTKCSLVRPKVMRSVHYCPATKKTLERKYSDLTSLEAFPSSSIYPTKDEENNPLETEYGLSTYKDHQTLSIQEMPEKAPAGQLPRSVDIIADDDLVDKCKPGDRVQIVGIYRCLPSKQGGFTSGTFRTILLANNIKLMSKEIAPTFSADDVAKIKKFCKAHSKDIFEHLSKSLAPSIHGHEYIKKAILCMLLGGNEKVLENGTRIRGDINVLLIGDPSVAKSQLLRYVLHTAPRAIPTTGRGSSGVGLTAAVTTDQETGERRLEAGAMVLADRGVVCIDEFDKMSDMDRTAIHEVMEQGRVTIAKAGIQARLNARCSVLAAANPVYGRYDQYRTPMENIGLQDSLLSRFDLLFIVLDKMDADNDQEIADHVLRMHRYRTPGEQDGYALPLGCSVEIFATDDPNASDVTDQELQIYEKHDNLLHGPRKNKSKIVSMQFIRKYIHVAKLIKPVLTSEAADYISQEYAKIRNHDQINNDSARTMPVTARALETMIRLSTAHAKVRMSKTIERQDAETALELVQFAYFKKVLAKEKKKTDKDLHDENLSQDTLSQESVRKSSRRAGKIADSQDDSMDPYSFSEQDSSLNENLSQSLRPQRKKAESQDGKRSLSQNRTKEFKAALLKAFKSSRSQSVAVSQLLELINKGNPEPFERSEVKEALDNMQNDNQVMVSEDVVFLI.

Residues 295–502 (IFEHLSKSLA…NDQEIADHVL (208 aa)) form the MCM domain. 345-352 (GDPSVAKS) lines the ATP pocket. The short motif at 477-480 (SRFD) is the Arginine finger element. The span at 664-673 (KTDKDLHDEN) shows a compositional bias: basic and acidic residues. Positions 664-741 (KTDKDLHDEN…QDGKRSLSQN (78 aa)) are disordered. Positions 707–723 (FSEQDSSLNENLSQSLR) are enriched in polar residues. A compositionally biased stretch (basic and acidic residues) spans 727–741 (KKAESQDGKRSLSQN).

This sequence belongs to the MCM family. As to quaternary structure, component of the mcm2-7 complex (RLF-M). The complex forms a toroidal hexameric ring with the proposed subunit order mcm2-mcm6-mcm4-mcm7-mcm3-mcm5. The heterodimer of mmcm3/mcm5 interacts with mcm4, mmcm6, mcm7 and weakly with mcm2. Interacts with mcm7, though this interaction may not be direct, and remains in a complex with mcm7 throughout the cell cycle. Component of the CMG helicase complex, composed of the mcm2-7 complex, the GINS complex and cdc45.

It localises to the nucleus. It is found in the chromosome. The catalysed reaction is ATP + H2O = ADP + phosphate + H(+). In terms of biological role, acts as a component of the mcm2-7 complex (mcm complex) which is the putative replicative helicase essential for 'once per cell cycle' DNA replication initiation and elongation in eukaryotic cells. The active ATPase sites in the mcm2-7 ring are formed through the interaction surfaces of two neighboring subunits such that a critical structure of a conserved arginine finger motif is provided in trans relative to the ATP-binding site of the Walker A box of the adjacent subunit. The six ATPase active sites, however, are likely to contribute differentially to the complex helicase activity. The existence of maternal and zygotic forms of mcm3 and mcm6 suggests that specific forms of mcm2-7 complexes may be used during different stages of development. This is Maternal DNA replication licensing factor mcm3 (mmcm3) from Xenopus laevis (African clawed frog).